We begin with the raw amino-acid sequence, 257 residues long: tRNA pseudouridine synthase A (257 aa).

Residue aspartate 53 is the Nucleophile of the active site. Tyrosine 111 contacts substrate.

It belongs to the tRNA pseudouridine synthase TruA family. In terms of assembly, homodimer.

It carries out the reaction uridine(38/39/40) in tRNA = pseudouridine(38/39/40) in tRNA. Its function is as follows. Formation of pseudouridine at positions 38, 39 and 40 in the anticodon stem and loop of transfer RNAs. This is tRNA pseudouridine synthase A from Xanthomonas campestris pv. campestris (strain 8004).